We begin with the raw amino-acid sequence, 2022 residues long: MKEQPVLERLQSQKSWIKGVFDKRECSTIIPSSKNPHRCTPVCQVCQNLIRCYCGRLIGDHAGIDYSWTISAAKGKESEQWSVEKHTTKSPTDTFGTINFQDGEHTHHAKYIRTSYDTKLDHLLHLMLKEWKMELPKLVISVHGGIQNFTMPSKFKEIFSQGLVKAAETTGAWIITEGINTGVSKHVGDALKSHSSHSLRKIWTVGIPPWGVIENQRDLIGKDVVCLYQTLDNPLSKLTTLNSMHSHFILSDDGTVGKYGNEMKLRRNLEKYLSLQKIHCRSRQGVPVVGLVVEGGPNVILSVWETVKDKDPVVVCEGTGRAADLLAFTHKHLADEGMLRPQVKEEIICMIQNTFNFSLKQSKHLFQILMECMVHRDCITIFDADSEEQQDLDLAILTALLKGTNLSASEQLNLAMAWDRVDIAKKHILIYEQHWKPDALEQAMSDALVMDRVDFVKLLIEYGVNLHRFLTIPRLEELYNTKQGPTNTLLHHLVQDVKQHTLLSGYRITLIDIGLVVEYLIGRAYRSNYTRKHFRALYNNLYRKYKHQRHSSGNRNESAESTLHSQFIRTAQPYKFKEKSIVLHKSRKKSKEQNVSDDPESTGFLYPYNDLLVWAVLMKRQKMAMFFWQHGEEATVKAVIACILYRAMAHEAKESHMVDDASEELKNYSKQFGQLALDLLEKAFKQNERMAMTLLTYELRNWSNSTCLKLAVSGGLRPFVSHTCTQMLLTDMWMGRLKMRKNSWLKIIISIILPPTILTLEFKSKAEMSHVPQSQDFQFMWYYSDQNASSSKESASVKEYDLERGHDEKLDENQHFGLESGHQHLPWTRKVYEFYSAPIVKFWFYTMAYLAFLMLFTYTVLVEMQPQPSVQEWLVSIYIFTNAIEVVREICISEPGKFTQKVKVWISEYWNLTETVAIGLFSAGFVLRWGDPPFHTAGRLIYCIDIIFWFSRLLDFFAVNQHAGPYVTMIAKMTANMFYIVIIMAIVLLSFGVARKAILSPKEPPSWSLARDIVFEPYWMIYGEVYAGEIDVCSSQPSCPPGSFLTPFLQAVYLFVQYIIMVNLLIAFFNNVYLDMESISNNLWKYNRYRYIMTYHEKPWLPPPLILLSHVGLLLRRLCCHRAPHDQEEGDVGLKLYLSKEDLKKLHDFEEQCVEKYFHEKMEDVNCSCEERIRVTSERVTEMYFQLKEMNEKVSFIKDSLLSLDSQVGHLQDLSALTVDTLKVLSAVDTLQEDEALLAKRKHSTCKKLPHSWSNVICAEVLGSMEIAGEKKYQYYSMPSSLLRSLAGGRHPPRVQRGALLEITNSKREATNVRNDQERQETQSSIVVSGVSPNRQAHSKYGQFLLVPSNLKRVPFSAETVLPLSRPSVPDVLATEQDIQTEVLVHLTGQTPVVSDWASVDEPKEKHEPIAHLLDGQDKAEQVLPTLSCTPEPMTMSSPLSQAKIMQTGGGYVNWAFSEGDETGVFSIKKKWQTCLPSTCDSDSSRSEQHQKQAQDSSLSDNSTRSAQSSECSEVGPWLQPNTSFWINPLRRYRPFARSHSFRFHKEEKLMKICKIKNLSGSSEIGQGAWVKAKMLTKDRRLSKKKKNTQGLQVPIITVNACSQSDQLNPEPGENSISEEEYSKNWFTVSKFSHTGVEPYIHQKMKTKEIGQCAIQISDYLKQSQEDLSKNSLWNSRSTNLNRNSLLKSSIGVDKISASLKSPQEPHHHYSAIERNNLMRLSQTIPFTPVQLFAGEEITVYRLEESSPLNLDKSMSSWSQRGRAAMIQVLSREEMDGGLRKAMRVVSTWSEDDILKPGQVFIVKSFLPEVVRTWHKIFQESTVLHLCLREIQQQRAAQKLIYTFNQVKPQTIPYTPRFLEVFLIYCHSANQWLTIEKYMTGEFRKYNNNNGDEITPTNTLEELMLAFSHWTYEYTRGELLVLDLQGVGENLTDPSVIKPEVKQSRGMVFGPANLGEDAIRNFIAKHHCNSCCRKLKLPDLKRNDYSPERINSTFGLEIKIESAEEPPARETGRNSPEDDMQL.

The Cytoplasmic segment spans residues 1 to 741 (MKEQPVLERL…MWMGRLKMRK (741 aa)). The helical transmembrane segment at 742 to 762 (NSWLKIIISIILPPTILTLEF) threads the bilayer. Topologically, residues 763–841 (KSKAEMSHVP…YEFYSAPIVK (79 aa)) are extracellular. Residues 842–862 (FWFYTMAYLAFLMLFTYTVLV) form a helical membrane-spanning segment. At 863 to 905 (EMQPQPSVQEWLVSIYIFTNAIEVVREICISEPGKFTQKVKVW) the chain is on the cytoplasmic side. A helical membrane pass occupies residues 906–926 (ISEYWNLTETVAIGLFSAGFV). Topologically, residues 927–939 (LRWGDPPFHTAGR) are extracellular. The helical transmembrane segment at 940–960 (LIYCIDIIFWFSRLLDFFAVN) threads the bilayer. Residues 961 to 972 (QHAGPYVTMIAK) lie on the Cytoplasmic side of the membrane. A helical membrane pass occupies residues 973 to 993 (MTANMFYIVIIMAIVLLSFGV). Residues 994 to 1012 (ARKAILSPKEPPSWSLARD) lie on the Extracellular side of the membrane. Residues 1013 to 1033 (IVFEPYWMIYGEVYAGEIDVC) constitute an intramembrane region (pore-forming). Topologically, residues 1034–1047 (SSQPSCPPGSFLTP) are extracellular. The helical transmembrane segment at 1048–1068 (FLQAVYLFVQYIIMVNLLIAF) threads the bilayer. The Cytoplasmic portion of the chain corresponds to 1069-2022 (FNNVYLDMES…RNSPEDDMQL (954 aa)). Residues 1479–1516 (TCDSDSSRSEQHQKQAQDSSLSDNSTRSAQSSECSEVG) are disordered. The span at 1483 to 1493 (DSSRSEQHQKQ) shows a compositional bias: basic and acidic residues. Positions 1494 to 1512 (AQDSSLSDNSTRSAQSSEC) are enriched in polar residues. The Alpha-type protein kinase domain maps to 1750 to 1980 (NLDKSMSSWS…CCRKLKLPDL (231 aa)). ADP is bound by residues G1777, G1778, L1779, R1780, and K1804. T1851 carries the post-translational modification Phosphothreonine; by autocatalysis. Positions 1876 and 1879 each coordinate ADP. Residue H1909 coordinates Zn(2+). The Proton acceptor role is filled by D1923. D1933 serves as a coordination point for ADP. Zn(2+) contacts are provided by H1966, C1968, and C1972. A disordered region spans residues 1997–2022 (EIKIESAEEPPARETGRNSPEDDMQL). Positions 1998 to 2016 (IKIESAEEPPARETGRNSP) are enriched in basic and acidic residues.

This sequence in the C-terminal section; belongs to the protein kinase superfamily. Alpha-type protein kinase family. ALPK subfamily. It in the N-terminal section; belongs to the transient receptor (TC 1.A.4) family. LTrpC subfamily. TRPM6 sub-subfamily. As to quaternary structure, homomers. Forms heteromers with TRPM7; TRPM6 increases the current amplitude of TRPM6/7 heteromers as compared to TRPM7 homomer. Interacts (via kinase domain) with RACK1. In terms of processing, autophosphorylated; autophosphorylation controlls the protein kinase activity of TRPM6 towards their substrates. Autophosphorylation of Thr-1851 in the kinase domain is essential for the inhibitory effect of RACK1. Post-translationally, the C-terminus of TRPM6 is proteolytically cleaved in vivo, in a cell type-specific fashion, releasing the kinase module from the transmembrane domain. The cleaved kinase fragments are translocated to the nucleus to phosphorylate histones and regulate gene expression. In terms of tissue distribution, highly expressed in kidney and colon. Isoform TRPM6a and isoform TRPM6b, are coexpressed with TRPM7 in kidney, and testis, and are also found in several cell lines of lung origin. Isoform TRPM6c is detected only in testis and in NCI-H510A small cell lung carcinoma cells.

Its subcellular location is the cell membrane. It localises to the apical cell membrane. The protein localises to the nucleus. The catalysed reaction is L-seryl-[protein] + ATP = O-phospho-L-seryl-[protein] + ADP + H(+). The enzyme catalyses L-threonyl-[protein] + ATP = O-phospho-L-threonyl-[protein] + ADP + H(+). It carries out the reaction Mg(2+)(in) = Mg(2+)(out). It catalyses the reaction Ca(2+)(in) = Ca(2+)(out). The catalysed reaction is Zn(2+)(in) = Zn(2+)(out). With respect to regulation, strongly inhibited by intracellular Mg(2+); unlikely to be active at physiological levels of intracellular Mg(2+). In the heteromeric TRPM6-TRPM7 channels complexes, TRPM7 are able to offset the very high sensitivity of TRPM6 to cytosolic Mg(2+) to physiologically relevant concentrations, whereas TRPM6 relieve TRPM7 from the inhibitory action of Mg-ATP. Consequently, the association of TRPM6 with TRPM7 allow for high constitutive activity of TRPM6/7 in the presence of physiological levels of Mg(2+) and Mg-ATP. The kinase activity is controlled through the autophosphorylation of a serine/threonine-rich region located to the N-terminal of the catalytic domain. Functionally, bifunctional protein that combines an ion channel with an intrinsic kinase domain, enabling it to modulate cellular functions either by conducting ions through the pore or by phosphorylating downstream proteins via its kinase domain. Crucial for Mg(2+) homeostasis. Has an important role in epithelial Mg(2+) transport and in the active Mg(2+) absorption in the gut and kidney. However, whether TRPM6 forms functional homomeric channels by itself or functions primarily as a subunit of heteromeric TRPM6-TRPM7 channels, is still under debate. Its function is as follows. The C-terminal kinase domain can be cleaved from the channel segment in a cell-type-specific fashion. The cleaved kinase fragments can translocate to the nucleus, and bind chromatin-remodeling complex proteins to ultimately phosphorylate specific Ser/Thr residues of histones known to be functionally important for cell differentiation and development. The protein is Transient receptor potential cation channel subfamily M member 6 (TRPM6) of Homo sapiens (Human).